A 486-amino-acid chain; its full sequence is Transcription factor aptf-4 (486 aa).

Disordered stretches follow at residues Cys25–Met49 and Leu150–Lys173. A compositionally biased stretch (polar residues) spans Leu150–Cys169. The interval Gln301–Glu430 is H-S-H (helix-span-helix), dimerization.

The protein belongs to the AP-2 family. In terms of assembly, binds DNA as a dimer.

It localises to the nucleus. In terms of biological role, sequence-specific DNA-binding protein that interacts with enhancer elements to regulate transcription of selected genes. Required for neuroblast and epidermal morphogenesis, perhaps acting in cooperation with transcription factor aptf-2. The sequence is that of Transcription factor aptf-4 from Caenorhabditis elegans.